The chain runs to 120 residues: Dense granule protein 5 (120 aa).

The signal sequence occupies residues 1 to 25 (MASVKRVVVAVMIVNVLALIFVGVA). The tract at residues 27-59 (STRDVGSGGDDSEGARGREQQQVQQHEQNEDRS) is disordered. A helical membrane pass occupies residues 76–93 (AVGLAAAVVAVVSLLRLL). Basic and acidic residues predominate over residues 100-109 (AIQEESKESA). Positions 100–120 (AIQEESKESATAEEEEVAEEE) are disordered. A compositionally biased stretch (acidic residues) spans 110–120 (TAEEEEVAEEE).

The protein localises to the secreted. It localises to the parasitophorous vacuole lumen. The protein resides in the parasitophorous vacuole membrane. Its subcellular location is the cytoplasmic vesicle. It is found in the secretory vesicle. Plays a role in the function of the cyst and parasitophorous vacuole membranes and therefore in host-parasite interactions. The protein is Dense granule protein 5 (GRA5) of Toxoplasma gondii.